A 514-amino-acid chain; its full sequence is Cytochrome P450 monooxygenase FUS8 (514 aa).

A helical transmembrane segment spans residues 28–48 (LTVTKAVGAFIVLFIIIPKVF). N-linked (GlcNAc...) asparagine glycosylation is found at Asn-225 and Asn-443. Cys-460 provides a ligand contact to heme.

It belongs to the cytochrome P450 family. Heme serves as cofactor.

Its subcellular location is the membrane. It participates in mycotoxin biosynthesis. In terms of biological role, cytochrome P450 monooxygenase; part of the gene cluster that mediates the biosynthesis of the mycotoxin fusarin C. Within the cluster, FUS1, FUS2, FUS8 and FUS9 are sufficient for fusarin production. The roles of the other FUS members are yet undetermined. The fusarin C synthetase FUS1 is responsible for the condensation of one acetyl-coenzyme A (CoA) unit with six malonyl-CoA units and the amide linkage of the arising heptaketide and homoserine, subsequently releasing the first intermediate, prefusarin, as an alcohol with an open ring structure. The cytochrome P450 monooxygenase FUS8 participates in multiple oxidation processes at carbon C-20 and is able to use the FUS1 product as substrate, resulting in formation of 20-hydroxy-prefusarin. This reaction seems to be essential before the 2-pyrrolidone ring closure can be catalyzed by FUS2, generating 20-hydroxy-fusarin. FUS8 is able to further oxidizes carbon C-20 after ring closure, resulting in the formation of carboxy-fusarin C. As the last step, FUS9 methylates the hydroxyl group at C-21 to generate fusarin C. Fusarin C can then rearrange to epi-fusarin C, the (z)-isomers, and fusarin A and fusarin D. This chain is Cytochrome P450 monooxygenase FUS8, found in Gibberella moniliformis (strain M3125 / FGSC 7600) (Maize ear and stalk rot fungus).